The following is a 173-amino-acid chain: Lipoprotein signal peptidase (173 aa).

Transmembrane regions (helical) follow at residues 7–27, 41–61, 70–90, and 95–115; these read FFWFTALLSLLLDHLTKLWVV, LWPGVFHLTYVTNTGAAFSLF, WLSLGVSVGLMALAILGPNFN, and AGYGFLLGGAAGNGIDRFVAG. Active-site residues include Asp119 and Asp135. A helical transmembrane segment spans residues 130–150; sequence IFNLADVFINIGIICLLIAAW.

It belongs to the peptidase A8 family.

The protein localises to the cell inner membrane. It catalyses the reaction Release of signal peptides from bacterial membrane prolipoproteins. Hydrolyzes -Xaa-Yaa-Zaa-|-(S,diacylglyceryl)Cys-, in which Xaa is hydrophobic (preferably Leu), and Yaa (Ala or Ser) and Zaa (Gly or Ala) have small, neutral side chains.. It functions in the pathway protein modification; lipoprotein biosynthesis (signal peptide cleavage). This protein specifically catalyzes the removal of signal peptides from prolipoproteins. This chain is Lipoprotein signal peptidase, found in Cyanothece sp. (strain PCC 7425 / ATCC 29141).